The primary structure comprises 338 residues: tRNA N6-adenosine threonylcarbamoyltransferase (338 aa).

Fe cation-binding residues include His-110 and His-114. Substrate is bound by residues 132–136 (LLSGG), Asp-165, Gly-178, and Asn-274. Asp-298 is a Fe cation binding site.

The protein belongs to the KAE1 / TsaD family. Fe(2+) serves as cofactor.

It localises to the cytoplasm. It catalyses the reaction L-threonylcarbamoyladenylate + adenosine(37) in tRNA = N(6)-L-threonylcarbamoyladenosine(37) in tRNA + AMP + H(+). Required for the formation of a threonylcarbamoyl group on adenosine at position 37 (t(6)A37) in tRNAs that read codons beginning with adenine. Is involved in the transfer of the threonylcarbamoyl moiety of threonylcarbamoyl-AMP (TC-AMP) to the N6 group of A37, together with TsaE and TsaB. TsaD likely plays a direct catalytic role in this reaction. In Borrelia garinii subsp. bavariensis (strain ATCC BAA-2496 / DSM 23469 / PBi) (Borreliella bavariensis), this protein is tRNA N6-adenosine threonylcarbamoyltransferase.